We begin with the raw amino-acid sequence, 814 residues long: Glycogen phosphorylase (814 aa).

Lys662 is modified (N6-(pyridoxal phosphate)lysine).

It belongs to the glycogen phosphorylase family. It depends on pyridoxal 5'-phosphate as a cofactor.

The catalysed reaction is [(1-&gt;4)-alpha-D-glucosyl](n) + phosphate = [(1-&gt;4)-alpha-D-glucosyl](n-1) + alpha-D-glucose 1-phosphate. In terms of biological role, phosphorylase is an important allosteric enzyme in carbohydrate metabolism. Enzymes from different sources differ in their regulatory mechanisms and in their natural substrates. However, all known phosphorylases share catalytic and structural properties. The polypeptide is Glycogen phosphorylase (glgP) (Chlamydia trachomatis serovar D (strain ATCC VR-885 / DSM 19411 / UW-3/Cx)).